The primary structure comprises 896 residues: Protein translocase subunit SecA (896 aa).

ATP-binding positions include Gln-87, Gly-105–Thr-109, and Asp-512. Disordered stretches follow at residues Arg-565–Ser-584 and Glu-840–Ala-896. 4 residues coordinate Zn(2+): Cys-876, Cys-878, Cys-887, and His-888. Residues Lys-882 to Ala-896 show a composition bias toward basic residues.

This sequence belongs to the SecA family. In terms of assembly, monomer and homodimer. Part of the essential Sec protein translocation apparatus which comprises SecA, SecYEG and auxiliary proteins SecDF-YajC and YidC. It depends on Zn(2+) as a cofactor.

It localises to the cell inner membrane. It is found in the cytoplasm. It catalyses the reaction ATP + H2O + cellular proteinSide 1 = ADP + phosphate + cellular proteinSide 2.. Functionally, part of the Sec protein translocase complex. Interacts with the SecYEG preprotein conducting channel. Has a central role in coupling the hydrolysis of ATP to the transfer of proteins into and across the cell membrane, serving both as a receptor for the preprotein-SecB complex and as an ATP-driven molecular motor driving the stepwise translocation of polypeptide chains across the membrane. This chain is Protein translocase subunit SecA, found in Mannheimia succiniciproducens (strain KCTC 0769BP / MBEL55E).